A 164-amino-acid polypeptide reads, in one-letter code: HTH-type transcriptional regulator IscR (164 aa).

The HTH rrf2-type domain maps to 2 to 131 (RLTSKGRYAV…NNITLAELVN (130 aa)). The segment at residues 28–51 (LADISERQGISLSYLEQLFSRLRK) is a DNA-binding region (H-T-H motif). Positions 92, 98, and 104 each coordinate [2Fe-2S] cluster. Residues 143 to 164 (NNDTRRTANGRPQETINVNLRA) form a disordered region. The span at 152–164 (GRPQETINVNLRA) shows a compositional bias: polar residues.

[2Fe-2S] cluster is required as a cofactor.

In terms of biological role, regulates the transcription of several operons and genes involved in the biogenesis of Fe-S clusters and Fe-S-containing proteins. The protein is HTH-type transcriptional regulator IscR of Yersinia pseudotuberculosis serotype O:1b (strain IP 31758).